We begin with the raw amino-acid sequence, 617 residues long: DNA-(apurinic or apyrimidinic site) endonuclease (617 aa).

Residues 74–99 (IKNSDEQNNSNNNNNNSSSSNFCSNN) form a disordered region. Over residues 81–99 (NNSNNNNNNSSSSNFCSNN) the composition is skewed to low complexity. 2 residues coordinate Mg(2+): N284 and E317. The interval 326–349 (SEPCDNKNKNKNKNDGIRDRGKIK) is disordered. The segment covering 329-349 (CDNKNKNKNKNDGIRDRGKIK) has biased composition (basic and acidic residues). Mg(2+)-binding residues include D474, N476, D606, and H607. Residue H607 is the Proton acceptor of the active site.

The protein belongs to the DNA repair enzymes AP/ExoA family. The cofactor is Mg(2+). It depends on Mn(2+) as a cofactor. Post-translationally, may be proteolytically cleaved into a 64 kDa form.

It is found in the mitochondrion. It carries out the reaction Exonucleolytic cleavage in the 3'- to 5'-direction to yield nucleoside 5'-phosphates.. Apurinic/apyrimidinic (AP) endonuclease activity is maximal at low Mg(2+) (0.5-2 mM) with no activity seen at high concentrations (more than 10 mM). 3'-5' exonuclease activity is maximal in the range of 0.5-2 mM Mg(2+) with activity seen up to 10 mM Mg(2+). Multifunctional protein that plays a central role in mitochondrial DNA base excision repair (BER) pathway induced by oxidative stress. Has apurinic/apyrimidinic (AP) endonuclease activity towards double-stranded DNA (dsDNA). Has nucleotide incision repair (NIR) activity; acts on dsDNA with oxidized bases thymine glycol and 5,6-dihydro-2'-deoxyuridine. Has 3'-5' exonuclease; can use dsDNA templates with 3'-OH termini including blunt-end, gapped and mismatched 3'-recessed. Has 3'-phosphatase activity; cleaves 3'-phosphate from blunt, recessed and gapped dsDNA templates, followed by 3'-5' exonuclease activity. Has RNase H-like activity; cleaves RNA on 3'-recessed RNA-DNA duplex. Plays a role in merosome infection of host erythrocytes. The polypeptide is DNA-(apurinic or apyrimidinic site) endonuclease (Plasmodium falciparum (isolate 3D7)).